Reading from the N-terminus, the 164-residue chain is NADH-quinone oxidoreductase subunit I (164 aa).

4Fe-4S ferredoxin-type domains are found at residues 55–85 (LRRY…IDAE) and 95–124 (TRYD…EGPN). [4Fe-4S] cluster is bound by residues Cys-65, Cys-68, Cys-71, Cys-75, Cys-104, Cys-107, Cys-110, and Cys-114.

It belongs to the complex I 23 kDa subunit family. NDH-1 is composed of 14 different subunits. Subunits NuoA, H, J, K, L, M, N constitute the membrane sector of the complex. Requires [4Fe-4S] cluster as cofactor.

It is found in the cell inner membrane. It carries out the reaction a quinone + NADH + 5 H(+)(in) = a quinol + NAD(+) + 4 H(+)(out). Functionally, NDH-1 shuttles electrons from NADH, via FMN and iron-sulfur (Fe-S) centers, to quinones in the respiratory chain. The immediate electron acceptor for the enzyme in this species is believed to be ubiquinone. Couples the redox reaction to proton translocation (for every two electrons transferred, four hydrogen ions are translocated across the cytoplasmic membrane), and thus conserves the redox energy in a proton gradient. The polypeptide is NADH-quinone oxidoreductase subunit I (Roseobacter denitrificans (strain ATCC 33942 / OCh 114) (Erythrobacter sp. (strain OCh 114))).